The sequence spans 624 residues: Galactan 5-O-arabinofuranosyltransferase (624 aa).

The next 13 helical transmembrane spans lie at 5–25 (VLGQ…VAIA), 43–63 (ALTT…GLLW), 73–93 (LGAL…PLGA), 127–147 (IGLP…IAAA), 159–179 (WSIV…AAMI), 181–201 (FEYA…YAST), 203–223 (PYAA…WAGL), 234–254 (AIVG…LLLV), 280–300 (LAVI…PYLL), 326–346 (FPMF…VWLV), 355–375 (AGAL…SMLT), 391–411 (LTVL…LAIA), and 422–442 (VVAA…QDIP).

Belongs to the glycosyltransferase 85 family.

The protein resides in the cell membrane. The catalysed reaction is Adds an alpha-D-arabinofuranosyl group from trans,octacis-decaprenylphospho-beta-D-arabinofuranose at the 5-O-position of the eighth, tenth and twelfth galactofuranose unit of the galactofuranan chain of [beta-D-galactofuranosyl-(1-&gt;5)-beta-D-galactofuranosyl-(1-&gt;6)]14-beta-D-galactofuranosyl-(1-&gt;5)-beta-D-galactofuranosyl-(1-&gt;4)-alpha-L-rhamnopyranosyl-(1-&gt;3)-N-acetyl-alpha-D-glucosaminyl-diphospho-trans,octacis-decaprenol.. Its pathway is cell wall biogenesis; cell wall polysaccharide biosynthesis. In terms of biological role, involved in the biosynthesis of the arabinogalactan (AG) region of the mycolylarabinogalactan-peptidoglycan (mAGP) complex, an essential component of the mycobacterial cell wall. Catalyzes the addition of the first key arabinofuranosyl (Araf) residue from the sugar donor decaprenyl-phospho-arabinose (DPA) on the C-5 of a 6-linked galactofuranosyl (Galf) of the galactan domain, thus 'priming' the galactan for further elaboration by other arabinofuranosyltransferases. It is not able to add an Araf residue to a terminal Galf. The polypeptide is Galactan 5-O-arabinofuranosyltransferase (Mycolicibacterium smegmatis (strain ATCC 700084 / mc(2)155) (Mycobacterium smegmatis)).